The following is a 316-amino-acid chain: Pantothenate kinase (316 aa).

ATP is bound at residue 95 to 102 (GSVAVGKS).

This sequence belongs to the prokaryotic pantothenate kinase family.

It is found in the cytoplasm. It catalyses the reaction (R)-pantothenate + ATP = (R)-4'-phosphopantothenate + ADP + H(+). It functions in the pathway cofactor biosynthesis; coenzyme A biosynthesis; CoA from (R)-pantothenate: step 1/5. This Shewanella halifaxensis (strain HAW-EB4) protein is Pantothenate kinase.